The sequence spans 291 residues: uncharacterized protein (291 aa).

A run of 2 helical transmembrane segments spans residues 42–62 and 86–106; these read IFFFLILILVFVLWILVRALW and TIFPCFISIFIVEPSFALALD.

It belongs to the cytochrome c oxidase subunit 2 family.

The protein localises to the mitochondrion membrane. This is an uncharacterized protein from Arabidopsis thaliana (Mouse-ear cress).